A 264-amino-acid chain; its full sequence is Hydroxyethylthiazole kinase (264 aa).

Met-52 serves as a coordination point for substrate. The ATP site is built by Arg-127 and Thr-173. Gly-200 is a substrate binding site.

It belongs to the Thz kinase family. Requires Mg(2+) as cofactor.

It catalyses the reaction 5-(2-hydroxyethyl)-4-methylthiazole + ATP = 4-methyl-5-(2-phosphooxyethyl)-thiazole + ADP + H(+). It participates in cofactor biosynthesis; thiamine diphosphate biosynthesis; 4-methyl-5-(2-phosphoethyl)-thiazole from 5-(2-hydroxyethyl)-4-methylthiazole: step 1/1. Functionally, catalyzes the phosphorylation of the hydroxyl group of 4-methyl-5-beta-hydroxyethylthiazole (THZ). This chain is Hydroxyethylthiazole kinase, found in Serratia proteamaculans (strain 568).